Reading from the N-terminus, the 427-residue chain is MLDIKWIRENPEALDAALAKRGAEPLAQTLVALDEKRRSAVQKTQDLLSRRNAASKEIGAAMAQKNAELAEKLKAEVAEIKETLPAAEEEERTLSAELIDALSRIPNVPFDDVPVGKDEHDNAVARIVGEKPRWNHTPREHFEIGEALGYMDFERAAKLSGSRFTVLTGPLARLERALGQFMIDLHTREHGYTEVSSPLMVRAEAVFGTGSLPKFEEDLFKTTDGRYLIPTAEVTLTNLVREEILDQEKLPLRFTALTPSFRSEAGSAGRDTRGMLRQHQFWKCELVSITDAESSIAEHERMTACAEEVLKRLGLHFRTMTLCTGDMGFGSRKTYDLEVWLPGQNAFREISSCSVCGDFQARRMNARYRGKDDKNNKFVHTLNGSGTAVGRCLIAVLENYLNEDGSVTIPDVLLPYMGGLTKIERAA.

231–233 (TAE) contributes to the L-serine binding site. Residue 262-264 (RSE) coordinates ATP. Glu285 serves as a coordination point for L-serine. Residue 349–352 (EISS) coordinates ATP. L-serine is bound at residue Ser385.

This sequence belongs to the class-II aminoacyl-tRNA synthetase family. Type-1 seryl-tRNA synthetase subfamily. In terms of assembly, homodimer. The tRNA molecule binds across the dimer.

Its subcellular location is the cytoplasm. The enzyme catalyses tRNA(Ser) + L-serine + ATP = L-seryl-tRNA(Ser) + AMP + diphosphate + H(+). The catalysed reaction is tRNA(Sec) + L-serine + ATP = L-seryl-tRNA(Sec) + AMP + diphosphate + H(+). The protein operates within aminoacyl-tRNA biosynthesis; selenocysteinyl-tRNA(Sec) biosynthesis; L-seryl-tRNA(Sec) from L-serine and tRNA(Sec): step 1/1. In terms of biological role, catalyzes the attachment of serine to tRNA(Ser). Is also able to aminoacylate tRNA(Sec) with serine, to form the misacylated tRNA L-seryl-tRNA(Sec), which will be further converted into selenocysteinyl-tRNA(Sec). The chain is Serine--tRNA ligase from Rhizobium etli (strain ATCC 51251 / DSM 11541 / JCM 21823 / NBRC 15573 / CFN 42).